A 395-amino-acid chain; its full sequence is NAC domain-containing protein 7 (395 aa).

Residues 7-156 (VPPGFRFHPT…GWVVCRVFKK (150 aa)) enclose the NAC domain. A DNA-binding region spans residues 107–162 (IGMRKTLVFYKGRAPNGQKSDWIMHEYRLETDENGTPQEEGWVVCRVFKKRLAAVR). Polar residues-rich tracts occupy residues 344–362 (AATA…SNAE) and 382–395 (TAST…DLWK). The interval 344–395 (AATASASIQNNAKDTSNAEYQVDEEKDPKRASDMGEEYTASTSSSCQIDLWK) is disordered.

This sequence belongs to the plant vascular related NAC-domain protein family. Interacts with NAC083/VNI2. In terms of tissue distribution, expressed in root, shoot and hypocotyl vascular elements, columella root caps, epidermal and cortex root cells and root-hypocotyl junctions. Observed predominantly in root imature xylem vessels. Present in root developing xylems. Specifically expressed in vessels in the secondary xylem of the root-hypocotyl region, and in vessels but not in interfascicular fibers in stems.

Its subcellular location is the nucleus. Its function is as follows. Transcription activator that binds to the secondary wall NAC binding element (SNBE), 5'-(T/A)NN(C/T)(T/C/G)TNNNNNNNA(A/C)GN(A/C/T)(A/T)-3', in the promoter of target genes. Involved in xylem formation by promoting the expression of secondary wall-associated transcription factors and of genes involved in secondary wall biosynthesis and programmed cell death, genes driven by the secondary wall NAC binding element (SNBE). Triggers thickening of secondary walls. This is NAC domain-containing protein 7 from Arabidopsis thaliana (Mouse-ear cress).